A 336-amino-acid chain; its full sequence is Anthranilate phosphoribosyltransferase (336 aa).

5-phospho-alpha-D-ribose 1-diphosphate contacts are provided by residues glycine 82, 85–86 (GD), threonine 90, 92–95 (NIST), 110–118 (KHGNRFASG), and serine 122. Glycine 82 provides a ligand contact to anthranilate. Serine 94 is a Mg(2+) binding site. Anthranilate is bound at residue asparagine 113. Arginine 168 contributes to the anthranilate binding site. Mg(2+) is bound by residues aspartate 227 and glutamate 228.

It belongs to the anthranilate phosphoribosyltransferase family. In terms of assembly, homodimer. It depends on Mg(2+) as a cofactor.

It catalyses the reaction N-(5-phospho-beta-D-ribosyl)anthranilate + diphosphate = 5-phospho-alpha-D-ribose 1-diphosphate + anthranilate. Its pathway is amino-acid biosynthesis; L-tryptophan biosynthesis; L-tryptophan from chorismate: step 2/5. Its function is as follows. Catalyzes the transfer of the phosphoribosyl group of 5-phosphorylribose-1-pyrophosphate (PRPP) to anthranilate to yield N-(5'-phosphoribosyl)-anthranilate (PRA). The polypeptide is Anthranilate phosphoribosyltransferase (Desulfitobacterium hafniense (strain DSM 10664 / DCB-2)).